Consider the following 1171-residue polypeptide: Protein WWC2 (1171 aa).

WW domains follow at residues 9–42 (LPLP…DPRD) and 56–89 (NELP…DPRK). Coiled-coil stretches lie at residues 120–193 (KEQR…YKEQ), 223–257 (ELKS…LEEA), and 301–420 (LAEK…KSAT). 2 disordered regions span residues 521–552 (SPTA…LSPP) and 603–637 (QALA…KNPD). The segment covering 534-551 (PKSVTSLSSLSSLSSLSP) has biased composition (low complexity). Composition is skewed to basic and acidic residues over residues 606-616 (AERKSTGEGLR) and 625-637 (GRTD…KNPD). The C2 domain maps to 684–806 (GAAQAQLILR…FSNDVHTQWY (123 aa)). Coiled-coil stretches lie at residues 836–870 (LDLD…EQLC) and 1047–1123 (DLEL…NAEK).

Belongs to the WWC family.

The protein resides in the cytoplasm. Its subcellular location is the cytosol. Its function is as follows. Negative regulator of the Hippo signaling pathway, also known as the Salvador-Warts-Hippo (SWH) pathway. The chain is Protein WWC2 (wwc2) from Xenopus tropicalis (Western clawed frog).